The sequence spans 175 residues: Probable chemoreceptor glutamine deamidase CheD (175 aa).

Belongs to the CheD family.

It catalyses the reaction L-glutaminyl-[protein] + H2O = L-glutamyl-[protein] + NH4(+). Its function is as follows. Probably deamidates glutamine residues to glutamate on methyl-accepting chemotaxis receptors (MCPs), playing an important role in chemotaxis. The sequence is that of Probable chemoreceptor glutamine deamidase CheD from Jannaschia sp. (strain CCS1).